We begin with the raw amino-acid sequence, 1018 residues long: Unconventional myosin-Ig (1018 aa).

M1 is subject to N-acetylmethionine. The Myosin motor domain occupies 9-707 (YGKPDFVLLD…TLVTLEQSRA (699 aa)). An ATP-binding site is contributed by 102-109 (GESGAGKT). The segment at 584–606 (MVALVENLASKEPFYVRCIKPNE) is actin-binding. The IQ domain maps to 710 to 739 (IPIIVLLLQKAWRGTLARWRCRRLRAIYTI). The 194-residue stretch at 824–1017 (GLRQDWGCRR…RGSFTLLWPS (194 aa)) folds into the TH1 domain.

Belongs to the TRAFAC class myosin-kinesin ATPase superfamily. Myosin family. As to quaternary structure, interacts with calmodulin; via its IQ motifs. In terms of tissue distribution, specifically expressed in hematopoietic cells.

The protein resides in the cell membrane. Its subcellular location is the cell projection. The protein localises to the phagocytic cup. Unconventional myosin required during immune response for detection of rare antigen-presenting cells by regulating T-cell migration. Unconventional myosins are actin-based motor molecules with ATPase activity and serve in intracellular movements. Acts as a regulator of T-cell migration by generating membrane tension, enforcing cell-intrinsic meandering search, thereby enhancing detection of rare antigens during lymph-node surveillance, enabling pathogen eradication. Also required in B-cells, where it regulates different membrane/cytoskeleton-dependent processes. Involved in Fc-gamma receptor (Fc-gamma-R) phagocytosis. Its function is as follows. Constitutes the minor histocompatibility antigen HA-2. More generally, minor histocompatibility antigens (mHags) refer to immunogenic peptide which, when complexed with MHC, can generate an immune response after recognition by specific T-cells. The peptides are derived from polymorphic intracellular proteins, which are cleaved by normal pathways of antigen processing. The binding of these peptides to MHC class I or class II molecules and their expression on the cell surface can stimulate T-cell responses and thereby trigger graft rejection or graft-versus-host disease (GVHD) after hematopoietic stem cell transplantation from HLA-identical sibling donor. GVHD is a frequent complication after bone marrow transplantation (BMT), due to mismatch of minor histocompatibility antigen in HLA-matched sibling marrow transplants. HA-2 is restricted to MHC class I HLA-A*0201. In Homo sapiens (Human), this protein is Unconventional myosin-Ig (MYO1G).